Reading from the N-terminus, the 613-residue chain is Apoptosis-inducing factor 1, mitochondrial (613 aa).

Short sequence motifs (mitochondrial localization signal) lie at residues 1-31 (MFRCGGLAAGALKQKLVPLVRTVCVRSPRQR) and 63-89 (KIDNSVLVLIVGLSTVGAGAYAYKTMK). Residues 1-54 (MFRCGGLAAGALKQKLVPLVRTVCVRSPRQRNRLPGNLFQRWHVPLELQMTRQM) constitute a mitochondrion transit peptide. A propeptide spans 55 to 101 (ASSGASGGKIDNSVLVLIVGLSTVGAGAYAYKTMKEDEKRYNERISG) (removed in mature form). Residues 100 to 127 (SGLGLTPEQKQKKAALSASEGEEVPQDK) form a disordered region. A Phosphothreonine modification is found at threonine 105. Lysine 109 carries the post-translational modification N6-succinyllysine. A phosphoserine mark is found at serine 116 and serine 118. Residues 134–483 (FLLIGGGTAA…KPYWHQSMFW (350 aa)) form an FAD-dependent oxidoreductase region. FAD is bound by residues 138–142 (GGGTA), 164–165 (ED), arginine 172, and lysine 177. Residue tryptophan 196 coordinates NAD(+). Residue valine 233 coordinates FAD. Lysine 255 participates in a covalent cross-link: Glycyl lysine isopeptide (Lys-Gly) (interchain with G-Cter in ubiquitin). The residue at position 268 (serine 268) is a Phosphoserine. Arginine 285 is an FAD binding site. Serine 292 carries the phosphoserine modification. Residues 308-311 (GGFL), glutamate 336, and lysine 342 contribute to the NAD(+) site. Residue serine 371 is modified to Phosphoserine. N6-acetyllysine is present on lysine 388. NAD(+) is bound at residue glycine 399. Aspartate 438 is an FAD binding site. The Nuclear localization signal signature appears at 446 to 451 (KLGRRR). Residues 453-454 (EH), tryptophan 483, and glutamate 493 each bind NAD(+). Residues 454–455 (HH) and tryptophan 483 each bind FAD. The span at 513–529 (AQDNPKSATEQSGTGIR) shows a compositional bias: polar residues. A disordered region spans residues 513–554 (AQDNPKSATEQSGTGIRSESETESEASEITIPPSTPAVPQAP). Threonine 521 bears the Phosphothreonine mark. Phosphoserine is present on residues serine 524 and serine 530. Residue asparagine 583 participates in NAD(+) binding. At lysine 593 the chain carries N6-acetyllysine.

Belongs to the FAD-dependent oxidoreductase family. As to quaternary structure, monomer (oxidized form). Homodimer (reduced form). Upon reduction with NADH, undergoes dimerization and forms tight, long-lived FADH2-NAD charge transfer complexes (CTC) resistant to oxidation. Also dimerizes with isoform 3 preventing its release from mitochondria. Interacts with XIAP/BIRC4. Interacts (via N-terminus) with EIF3G (via C-terminus). Interacts with PRELID1. Interacts with CHCHD4; the interaction increases in presence of NADH. Interacts with processed form of PARP1 (Poly [ADP-ribose] polymerase 1, processed C-terminus); interaction is mediated with poly-ADP-ribose chains attached to PARP1, promoting translocation into the nucleus. FAD serves as cofactor. Post-translationally, under normal conditions, a 54-residue N-terminal segment is first proteolytically removed during or just after translocation into the mitochondrial intermembrane space (IMS) by the mitochondrial processing peptidase (MPP) to form the inner-membrane-anchored mature form (AIFmit). During apoptosis, it is further proteolytically processed at amino-acid position 101 leading to the generation of the mature form, which is confined to the mitochondrial IMS in a soluble form (AIFsol). AIFsol is released to the cytoplasm in response to specific death signals, and translocated to the nucleus, where it induces nuclear apoptosis in a caspase-independent manner. Ubiquitination by XIAP/BIRC4 does not lead to proteasomal degradation. Ubiquitination at Lys-255 by XIAP/BIRC4 blocks its ability to bind DNA and induce chromatin degradation, thereby inhibiting its ability to induce cell death. In terms of tissue distribution, expressed in all tested tissues. Detected in muscle and skin fibroblasts (at protein level). Expressed in osteoblasts (at protein level). As to expression, brain specific. Expressed in all tested tissues except brain. In terms of tissue distribution, isoform 5 is frequently down-regulated in human cancers.

It is found in the mitochondrion intermembrane space. It localises to the mitochondrion inner membrane. The protein resides in the cytoplasm. Its subcellular location is the nucleus. The protein localises to the perinuclear region. It is found in the mitochondrion. It localises to the cytosol. It catalyses the reaction A + NADH + H(+) = AH2 + NAD(+). Its function is as follows. Functions both as NADH oxidoreductase and as regulator of apoptosis. In response to apoptotic stimuli, it is released from the mitochondrion intermembrane space into the cytosol and to the nucleus, where it functions as a proapoptotic factor in a caspase-independent pathway. Release into the cytoplasm is mediated upon binding to poly-ADP-ribose chains. The soluble form (AIFsol) found in the nucleus induces 'parthanatos' i.e. caspase-independent fragmentation of chromosomal DNA. Binds to DNA in a sequence-independent manner. Interacts with EIF3G, and thereby inhibits the EIF3 machinery and protein synthesis, and activates caspase-7 to amplify apoptosis. Plays a critical role in caspase-independent, pyknotic cell death in hydrogen peroxide-exposed cells. In contrast, participates in normal mitochondrial metabolism. Plays an important role in the regulation of respiratory chain biogenesis by interacting with CHCHD4 and controlling CHCHD4 mitochondrial import. In terms of biological role, has NADH oxidoreductase activity. Does not induce nuclear apoptosis. Functionally, pro-apoptotic isoform. This Homo sapiens (Human) protein is Apoptosis-inducing factor 1, mitochondrial.